Reading from the N-terminus, the 63-residue chain is UPF0370 protein ECA1289 (63 aa).

A helical membrane pass occupies residues 3–23; the sequence is WLADYWWIILIILIGMLINGI. A disordered region spans residues 39 to 63; that stretch reads PKLPPHRDNNDKWDNEEDDWPKKKP.

Belongs to the UPF0370 family.

The protein resides in the cell membrane. The sequence is that of UPF0370 protein ECA1289 from Pectobacterium atrosepticum (strain SCRI 1043 / ATCC BAA-672) (Erwinia carotovora subsp. atroseptica).